A 245-amino-acid chain; its full sequence is Endo-chitosanase (245 aa).

A signal peptide spans 1–17; the sequence is MHFAGIVAIALATGATA.

It belongs to the glycosyl hydrolase 75 family.

It localises to the secreted. It carries out the reaction Endohydrolysis of beta-(1-&gt;4)-linkages between D-glucosamine residues in a partly acetylated chitosan.. Its function is as follows. Chitosanase catalyzing the endo-type cleavage of chitosan, the deacylated form of chitin. Chitosanase may be crucial in the degradation of the deacetylated portion of chitin in the fungal cell wall. Chitoolisaccharides produced by the hydrolysis of partially N-acetylated chitosan are known to have many biological activities, including antibacterial activity, immune-enhancing effects, and elicitor activity. The protein is Endo-chitosanase (csn) of Aspergillus oryzae (strain ATCC 42149 / RIB 40) (Yellow koji mold).